An 826-amino-acid chain; its full sequence is MATTANGNSKKRDGGLSSLAPRKINVQKFSEARAPELESLHSIVSERLNKDFRSKRNKRRRTNSYNNQPAKKRNIKRQKSQSLIGQVSGGDHEVKITRRVKRRMELKGNPETGFCTSGDGTKRLRTHVWHAKRFTMTKLWGFHLPLGLHGRGRGSRDVLKQSRQGVLVHDASYHIAVQLEGPEGSLLSILNMLLEPSPSSHSKEVFDSILTGGSYENAMLYHVEPPVSQAIAPVTYMWRPSKIPKRRNEEKGGDGIGTDLPVSDKDHEDFRKLWVWIHASSFSEGYAILKVACQKQMNETGVSVDCFSLEGQLAKLEIFGSKASHLLQKTLHPATSTSENPSILRKCSMEKAEVKNVADLYTEENVSSGAILAQFVIDPRLILTSPHDDRTVSVETIKTEPTESVETTTNTEAETFPEVFNCLWDANSELTPPEEENMLCWEKHQSRMDSLCLDDPAAEVPKVSSRPRSSRSCPLLLLKHKKLGNAPTGWSLILPLSWIKVFWNAFVSKGAHAIGQREKRWVSCDDGLPFFPSDFPDCKAYSSFTLSEAADLEEKAQRRPPAIRPFRIPIPPPWNSIHVTRSIGEGSNQKFSSNGRSVVEISSYGGNLFDGIVARTSDSLTTFLQTFTSDNMLLFPHNTSKPSTDLMMTLQEDDKKVRAQIHQSSNKLCLVRVLLHAFKEGSFEEGAVVCAPTLADISLLKSSCSEGEDGRVTIPQSSVSSYFQEQPCGTWELNVPEDTLTEQSHRWPIGFVTTGFVRGSKKPAAEAFCDAVLLGRLRDEQWRDKDVRRRKKQIYVLVRNLRSSAFRLALATIVLEQQDYCDVHCF.

Disordered stretches follow at residues 1–24 (MATT…PRKI) and 49–91 (NKDF…SGGD). Positions 58–65 (KRRRTNSY) match the Nuclear localization signal motif. The span at 70-79 (AKKRNIKRQK) shows a compositional bias: basic residues.

As to quaternary structure, component of nuclear RNase P and RNase MRP ribonucleoproteins. RNase P consists of a catalytic RNA moiety and different protein chains. Several subunits of RNase P are also part of the RNase MRP complex. RNase MRP consists of a catalytic RNA moiety and several protein subunits.

Its subcellular location is the nucleus. It localises to the nucleolus. Component of ribonuclease P, a ribonucleoprotein complex that generates mature tRNA molecules by cleaving their 5'-ends. Also a component of the MRP ribonuclease complex, which cleaves pre-rRNA sequences. Required for rRNA maturation, including 5.8S rRNA processing. The polypeptide is Ribonucleases P/MRP protein subunit POP1 (Arabidopsis thaliana (Mouse-ear cress)).